Reading from the N-terminus, the 906-residue chain is Protein translocase subunit SecA (906 aa).

ATP contacts are provided by residues Gln-89, 107-111 (GEGKT), and Asp-502. The tract at residues 829-898 (EAPPEPELPP…ACPCGSGKKY (70 aa)) is disordered. Residues 858–877 (WSDHQHDERNVPAAERDPAD) show a composition bias toward basic and acidic residues. Positions 890, 892, 901, and 902 each coordinate Zn(2+).

The protein belongs to the SecA family. Monomer and homodimer. Part of the essential Sec protein translocation apparatus which comprises SecA, SecYEG and auxiliary proteins SecDF-YajC and YidC. Zn(2+) is required as a cofactor.

The protein resides in the cell inner membrane. Its subcellular location is the cytoplasm. The enzyme catalyses ATP + H2O + cellular proteinSide 1 = ADP + phosphate + cellular proteinSide 2.. Part of the Sec protein translocase complex. Interacts with the SecYEG preprotein conducting channel. Has a central role in coupling the hydrolysis of ATP to the transfer of proteins into and across the cell membrane, serving both as a receptor for the preprotein-SecB complex and as an ATP-driven molecular motor driving the stepwise translocation of polypeptide chains across the membrane. The sequence is that of Protein translocase subunit SecA from Brucella anthropi (strain ATCC 49188 / DSM 6882 / CCUG 24695 / JCM 21032 / LMG 3331 / NBRC 15819 / NCTC 12168 / Alc 37) (Ochrobactrum anthropi).